Here is a 372-residue protein sequence, read N- to C-terminus: N-acetylneuraminate-9-phosphate synthase (372 aa).

The 59-residue stretch at 314–372 (SIVAARNLNKGYRLQLADMAIKVSEPSGLTAEDFLDLVGKELADNIGEDEPILGNSIIN) folds into the AFP-like domain.

The catalysed reaction is aldehydo-N-acetyl-D-mannosamine 6-phosphate + phosphoenolpyruvate + H2O = N-acetylneuraminate 9-phosphate + phosphate. It catalyses the reaction aldehydo-D-mannose 6-phosphate + phosphoenolpyruvate + H2O = 3-deoxy-D-glycero-beta-D-galacto-non-2-ulopyranosonate 9-phosphate + phosphate. In terms of biological role, catalyzes the condensation of phosphoenolpyruvate (PEP) and N-acetylmannosamine 6-phosphate (ManNAc-6-P) or D-mannose 6-phosphate (Man-6-P) to generate the phosphorylated forms of both the sialic acids N-acetylneuraminic acid (Neu5Ac) and deaminoneuraminic acid (KDN), respectively. Essential for biosynthesis of sialic acids in neurons of the central nervous system. In Drosophila melanogaster (Fruit fly), this protein is N-acetylneuraminate-9-phosphate synthase.